Reading from the N-terminus, the 102-residue chain is Integration host factor subunit alpha (102 aa).

The tract at residues 49-71 (FGNFQLRTKPQRPGRNPKTGEEI) is disordered.

This sequence belongs to the bacterial histone-like protein family. Heterodimer of an alpha and a beta chain.

Its function is as follows. This protein is one of the two subunits of integration host factor, a specific DNA-binding protein that functions in genetic recombination as well as in transcriptional and translational control. In Nitrosomonas eutropha (strain DSM 101675 / C91 / Nm57), this protein is Integration host factor subunit alpha.